A 195-amino-acid polypeptide reads, in one-letter code: Putative CheY-P phosphatase CheC1 (195 aa).

It belongs to the CheC family.

Functionally, catalyzes the dephosphorylation of CheY-P. The polypeptide is Putative CheY-P phosphatase CheC1 (cheC1) (Halobacterium salinarum (strain ATCC 29341 / DSM 671 / R1)).